Here is a 1395-residue protein sequence, read N- to C-terminus: uncharacterized protein (1395 aa).

Position 89–96 (89–96 (AYKKWGKS)) interacts with ATP. 2 disordered regions span residues 146–166 (EEKI…LSPP) and 205–391 (SSSS…MENR). Composition is skewed to low complexity over residues 155–166 (GSPSPEAELSPP) and 205–222 (SSSS…TSSP). The span at 230 to 269 (EVTKERSSEVPTTVHEKTQSKSKNEKENKFSNGTIEEKPA) shows a compositional bias: basic and acidic residues. Residues 287–301 (SWSSGSSEAGSSSSG) are compositionally biased toward low complexity. Positions 313-328 (VKVRHKAREIRNKKGR) are enriched in basic residues. The segment covering 337-346 (KHGEKAERNI) has biased composition (basic and acidic residues). The segment covering 349–358 (GSSSSSSSGS) has biased composition (low complexity). The segment covering 369 to 391 (PLKEIGRKDPGSTEGKDLYMENR) has biased composition (basic and acidic residues). S814 and S1080 each carry phosphoserine. The disordered stretch occupies residues 1110–1132 (PISASELSPGGGSESEFESEKDE). Phosphoserine is present on residues S1194 and S1338. Basic and acidic residues predominate over residues 1346–1359 (TGERDSGAKSDGFR). The tract at residues 1346–1395 (TGERDSGAKSDGFRGKMCSSASSTSEETGSEGGGEWVGPSEEELFSRTHL) is disordered.

This is an uncharacterized protein from Homo sapiens (Human).